A 293-amino-acid polypeptide reads, in one-letter code: Ribosomal protein L11 methyltransferase (293 aa).

S-adenosyl-L-methionine is bound by residues Thr-145, Gly-166, Asp-188, and Asn-230.

It belongs to the methyltransferase superfamily. PrmA family.

The protein localises to the cytoplasm. The enzyme catalyses L-lysyl-[protein] + 3 S-adenosyl-L-methionine = N(6),N(6),N(6)-trimethyl-L-lysyl-[protein] + 3 S-adenosyl-L-homocysteine + 3 H(+). Functionally, methylates ribosomal protein L11. This chain is Ribosomal protein L11 methyltransferase, found in Serratia proteamaculans (strain 568).